Reading from the N-terminus, the 676-residue chain is Ribosome quality control complex subunit TCF25 (676 aa).

Disordered regions lie at residues 1–59 (MSRR…VRVN) and 85–147 (LTDA…ENGL). Positions 123–136 (GKLRKKKKKQKNKK) are enriched in basic residues. Ser-602 is modified (phosphoserine).

This sequence belongs to the TCF25 family. As to quaternary structure, component of the ribosome quality control complex (RQC), composed of the E3 ubiquitin ligase LTN1, TCF25 and NEMF associated with the 60S ribosomal subunit. Interacts (via C-terminus) with NFATC4; the interaction leads to suppresson of NFATC4 transcription factor activity and is reduced following stimulation with angiotensin-2. Interacts with XIAP. In terms of tissue distribution, in the embryo, widely expressed with highest levels in brain. In the adult, highest expression is found in the heart. Repressed in cardiac tissue of patients with heart failure (at protein level). mRNA levels in the heart are unchanged in patients with heart failure.

The protein localises to the nucleus. It localises to the cytoplasm. The protein resides in the cytosol. Component of the ribosome quality control complex (RQC), a ribosome-associated complex that mediates ubiquitination and extraction of incompletely synthesized nascent chains for proteasomal degradation. In the RQC complex, required to promote formation of 'Lys-48'-linked polyubiquitin chains during ubiquitination of incompletely synthesized proteins by LTN1. May negatively regulate the calcineurin-NFAT signaling cascade by suppressing the activity of transcription factor NFATC4. May play a role in cell death control. The chain is Ribosome quality control complex subunit TCF25 from Homo sapiens (Human).